Here is a 274-residue protein sequence, read N- to C-terminus: Large ribosomal subunit protein uL2 (274 aa).

The tract at residues 224 to 274 (VAMNPVDHPHGGGEGRTSGGRHPVTPWGIPTKGYKTRKNKRSNKLIVQKRK) is disordered. Positions 257–274 (YKTRKNKRSNKLIVQKRK) are enriched in basic residues.

Belongs to the universal ribosomal protein uL2 family. Part of the 50S ribosomal subunit. Forms a bridge to the 30S subunit in the 70S ribosome.

One of the primary rRNA binding proteins. Required for association of the 30S and 50S subunits to form the 70S ribosome, for tRNA binding and peptide bond formation. It has been suggested to have peptidyltransferase activity; this is somewhat controversial. Makes several contacts with the 16S rRNA in the 70S ribosome. This Francisella philomiragia subsp. philomiragia (strain ATCC 25017 / CCUG 19701 / FSC 153 / O#319-036) protein is Large ribosomal subunit protein uL2.